The following is a 158-amino-acid chain: uncharacterized protein (158 aa).

This is an uncharacterized protein from Caenorhabditis elegans.